An 88-amino-acid chain; its full sequence is Small ribosomal subunit protein bS20 (88 aa).

Residues 1 to 27 (MANSKTAKKRAIQSEKRRQHNASRRSM) form a disordered region.

It belongs to the bacterial ribosomal protein bS20 family.

Binds directly to 16S ribosomal RNA. In Shewanella amazonensis (strain ATCC BAA-1098 / SB2B), this protein is Small ribosomal subunit protein bS20.